The following is a 423-amino-acid chain: MGCLRPIYVLFFCFVVRVYGQYEAYQWDEDYEQEPSEDYEPEFQFHQNIEYGAPFYQNILGCAKECFCPTNFPTSMYCDNRKLKTIPDIPMHIQQLNLQFNDIEAVTADSFINATHLKEINLSHNKIKSQKIDYGVFAKLSNLQQLHLDHNNLEEFPFPLPKSLERLLLGYNEISTLPTHAMDGLVNVTMLDLCYNHLSDSTLKGKILSKLEKLMQLNLCNNRLESMPPGLPLSLMYLSLENNSISSIPEDYFQKLPKLHALRISHNKLEDIPYDIFNLSNLIELNVGHNKLKQAFYIPRNLEHLYLQNNEIQSINVTMMCPSLDPLHHHHLTYLRVDQNKLKEPISSYIFFCFPRIHSIYYGEQRSTNGETIQLKTQVFRRYQDEEEEEEDDSQDHTLEGQEETEEHFNSHYYEMQAWQNTI.

The signal sequence occupies residues 1-20 (MGCLRPIYVLFFCFVVRVYG). Residues tyrosine 22, tyrosine 25, tyrosine 31, tyrosine 39, tyrosine 51, and tyrosine 77 each carry the sulfotyrosine modification. An LRRNT domain is found at 53 to 91 (APFYQNILGCAKECFCPTNFPTSMYCDNRKLKTIPDIPM). LRR repeat units follow at residues 92 to 113 (HIQQLNLQFNDIEAVTADSFIN), 116 to 129 (HLKEINLSHNKIKS), 142 to 164 (NLQQLHLDHNNLEEFPFPLPKSL), 165 to 184 (ERLLLGYNEISTLPTHAMDG), 187 to 207 (NVTMLDLCYNHLSDSTLKGKI), 213 to 233 (KLMQLNLCNNRLESMPPGLPL), 234 to 255 (SLMYLSLENNSISSIPEDYFQK), 258 to 279 (KLHALRISHNKLEDIPYDIFNL), 281 to 294 (NLIELNVGHNKLKQ), 301 to 322 (NLEHLYLQNNEIQSINVTMMCP), and 331 to 353 (HLTYLRVDQNKLKEPISSYIFFC). N-linked (GlcNAc...) asparagine glycans are attached at residues asparagine 113 and asparagine 121. N-linked (GlcNAc...) asparagine glycosylation is present at asparagine 187. Asparagine 242 and asparagine 278 each carry an N-linked (GlcNAc...) asparagine glycan. Asparagine 316 carries N-linked (GlcNAc...) asparagine glycosylation. The cysteines at positions 321 and 353 are disulfide-linked. The interval 383 to 408 (YQDEEEEEEDDSQDHTLEGQEETEEH) is disordered. The segment covering 385-394 (DEEEEEEDDS) has biased composition (acidic residues). Residues tyrosine 413 and tyrosine 414 each carry the sulfotyrosine modification.

It belongs to the small leucine-rich proteoglycan (SLRP) family. SLRP class II subfamily. In terms of assembly, binds the alpha(V)beta(3)-integrin. Glycosylated; contains keratan sulfate. Osteoblast and odontoblast. Expressed in femoral bone and calvaria tissues. Detected in femoral head, rib, tendon and bone marrow.

It is found in the secreted. The protein localises to the extracellular space. It localises to the extracellular matrix. Its function is as follows. May be implicated in biomineralization processes. Has a function in binding of osteoblasts via the alpha(V)beta(3)-integrin. This is Osteomodulin (Omd) from Rattus norvegicus (Rat).